A 277-amino-acid polypeptide reads, in one-letter code: Transcription antiterminator LicT (277 aa).

2 consecutive PRD domains span residues 65–170 (DIPI…EEMP) and 171–277 (NIIN…VKQA).

It belongs to the transcriptional antiterminator BglG family. Post-translationally, phosphorylated.

Functionally, mediates positive regulation of the glucanase operon (licST) by functioning as an antiterminator factor of transcription. Prevents termination at terminator lic-t. This chain is Transcription antiterminator LicT (licT), found in Bacillus subtilis (strain 168).